Here is a 496-residue protein sequence, read N- to C-terminus: Histidine--tRNA ligase (496 aa).

The protein belongs to the class-II aminoacyl-tRNA synthetase family. As to quaternary structure, homodimer.

It localises to the cytoplasm. It carries out the reaction tRNA(His) + L-histidine + ATP = L-histidyl-tRNA(His) + AMP + diphosphate + H(+). This chain is Histidine--tRNA ligase, found in Bartonella bacilliformis (strain ATCC 35685 / KC583 / Herrer 020/F12,63).